The sequence spans 346 residues: KH domain-containing, RNA-binding, signal transduction-associated protein 3 (346 aa).

An involved in homodimerization region spans residues 1-160; the sequence is MEEKYLPELM…IKKFLIPDYN (160 aa). A Glycyl lysine isopeptide (Lys-Gly) (interchain with G-Cter in SUMO2) cross-link involves residue lysine 4. Residues 61 to 127 enclose the KH domain; that stretch reads LIPVKQFPKF…AKYFHLNDDL (67 aa). 2 disordered regions span residues 212–266 and 317–346; these read RPVA…QETY and GQEE…YGRY. Pro residues predominate over residues 253–262; sequence GYRPPPPPPT.

The protein belongs to the KHDRBS family. Self-associates to form homooligomers; dimerization increases RNA affinity. Interacts with KHDRBS2/SLM-1. Interacts with KHDRBS1/SAM68; heterooligomer formation of KHDRBS family proteins may modulate RNA substrate specificity. Interacts with the splicing regulatory proteins SFRS9, SAFB and YTHDC1. Interacts with HNRPL, RBMX, p85 subunit of PI3-kinase, SERPINB5. Phosphorylated on tyrosine residues by PTK6. In terms of tissue distribution, highly expressed in testis and brain. In adult cerebellum expressed predominantly in internal granular layer interneurons and in hippocampus is exclusively expressed in CA neurons; expression is restricted to neuronal subpopulations largely non-overlapping with expression of KHDRBS2/SLM-1.

It localises to the nucleus. RNA-binding protein that plays a role in the regulation of alternative splicing and influences mRNA splice site selection and exon inclusion. Binds preferentially to the 5'-[AU]UAAA-3' motif in vitro. Binds optimally to RNA containing 5'-[AU]UAA-3' as a bipartite motif spaced by more than 15 nucleotides. Binds poly(A). RNA-binding abilities are down-regulated by tyrosine kinase PTK6. Involved in splice site selection of vascular endothelial growth factor. In vitro regulates CD44 alternative splicing by direct binding to purine-rich exonic enhancer. Can regulate alternative splicing of neurexins NRXN1-3 in the laminin G-like domain 6 containing the evolutionary conserved neurexin alternative spliced segment 4 (AS4) involved in neurexin selective targeting to postsynaptic partners such as neuroligins and LRRTM family members. High concentrations in forebrain structures block splicing inclusion of NRXN1-3 AS4 exons while low concentrations favor their inclusion. Targeted, cell-type specific splicing regulation of NRXN1 at AS4 is involved in neuronal glutamatergic synapse function and plasticity and is linked to behavioral aspects. Regulates expression of KHDRBS2/SLIM-1 in defined neuron populations in the hippocampus by modifying its alternative splicing resulting in a transcript predicted to undergo nonsense-mediated decay. Can bind FABP9 mRNA. May play a role as a negative regulator of cell growth. Inhibits cell proliferation. In Mus musculus (Mouse), this protein is KH domain-containing, RNA-binding, signal transduction-associated protein 3 (Khdrbs3).